The sequence spans 873 residues: Coatomer subunit gamma-2 (873 aa).

A compositionally biased stretch (basic and acidic residues) spans 1–11 (MIKKFDKKDEE). Residues 1–21 (MIKKFDKKDEESGSGSNPFQN) are disordered. 6 HEAT repeats span residues 64-101 (TEAT…ISED), 283-320 (RELA…KHPS), 321-355 (AVTA…GSES), 356-392 (SVDR…KYPR), 394-430 (HSAM…ENPE), and 467-504 (PQPS…QNDD).

This sequence belongs to the COPG family. In terms of assembly, oligomeric complex.

It is found in the cytoplasm. The protein resides in the golgi apparatus membrane. Its subcellular location is the cytoplasmic vesicle. It localises to the COPI-coated vesicle membrane. The coatomer is a cytosolic protein complex that binds to dilysine motifs and reversibly associates with Golgi non-clathrin-coated vesicles, which further mediate biosynthetic protein transport from the ER, via the Golgi up to the trans Golgi network. Coatomer complex is required for budding from Golgi membranes, and is essential for the retrograde Golgi-to-ER transport of dilysine-tagged proteins. This is Coatomer subunit gamma-2 (copg2) from Takifugu rubripes (Japanese pufferfish).